The primary structure comprises 228 residues: Adapter protein MecA (228 aa).

Residues 79-98 (GQKNDDSAADQTDDEGTDTQ) form a disordered region. Positions 85–95 (SAADQTDDEGT) are enriched in acidic residues.

This sequence belongs to the MecA family. Homodimer.

Its function is as follows. Enables the recognition and targeting of unfolded and aggregated proteins to the ClpC protease or to other proteins involved in proteolysis. In Lacticaseibacillus casei (strain BL23) (Lactobacillus casei), this protein is Adapter protein MecA.